The sequence spans 310 residues: Urease accessory protein UreD (310 aa).

This sequence belongs to the UreD family. In terms of assembly, ureD, UreF and UreG form a complex that acts as a GTP-hydrolysis-dependent molecular chaperone, activating the urease apoprotein by helping to assemble the nickel containing metallocenter of UreC. The UreE protein probably delivers the nickel.

The protein resides in the cytoplasm. Functionally, required for maturation of urease via the functional incorporation of the urease nickel metallocenter. The protein is Urease accessory protein UreD of Synechococcus sp. (strain RCC307).